The primary structure comprises 307 residues: Protein rep (307 aa).

Tyr-219 is a DNA binding site.

Belongs to the Gram-positive plasmids replication protein type 1 family.

The chain is Protein rep (repA) from Bacillus sp.